We begin with the raw amino-acid sequence, 134 residues long: Fatty acid-binding protein, muscle (134 aa).

(9Z)-octadecenoate-binding positions include R109 and 129–131; that span reads RIY.

Belongs to the calycin superfamily. Fatty-acid binding protein (FABP) family. Monomer. Adult flight muscle.

Its subcellular location is the cytoplasm. Its function is as follows. Binds fatty acids in a 1:1 molar ratio. This Schistocerca gregaria (Desert locust) protein is Fatty acid-binding protein, muscle.